The following is an 852-amino-acid chain: Bifunctional heparan sulfate N-deacetylase/N-sulfotransferase 1 (852 aa).

The Cytoplasmic segment spans residues 1–13 (MIITPYLNRKITR). The helical; Signal-anchor for type II membrane protein transmembrane segment at 14–34 (PLKWILALIFLYLIYICLFSN) threads the bilayer. Residues 34 to 574 (NNSKPPKPRK…PRHHAILPPS (541 aa)) are heparan sulfate N-deacetylase 1. Over 35–852 (NSKPPKPRKK…WLEESVRIRA (818 aa)) the chain is Lumenal. Residues Asn50, Asn72, Asn261, Asn328, Asn377, Asn428, and Asn576 are each glycosylated (N-linked (GlcNAc...) asparagine). Positions 575–852 (INCTKKSLPD…WLEESVRIRA (278 aa)) are heparan sulfate N-sulfotransferase 1. The active-site For sulfotransferase activity is Lys592. 592-596 (KTGST) contacts 3'-phosphoadenylyl sulfate. Asn607 is a glycosylation site (N-linked (GlcNAc...) asparagine). Ser686 is a binding site for 3'-phosphoadenylyl sulfate. An N-linked (GlcNAc...) asparagine glycan is attached at Asn712. The cysteines at positions 789 and 798 are disulfide-linked. 803 to 807 (KGRKY) serves as a coordination point for 3'-phosphoadenylyl sulfate.

The protein belongs to the sulfotransferase 1 family. NDST subfamily. Monomer. As to expression, present in some specific neurons in head and tail regions and muscles.

The protein localises to the golgi apparatus membrane. The catalysed reaction is alpha-D-glucosaminyl-[heparan sulfate](n) + 3'-phosphoadenylyl sulfate = N-sulfo-alpha-D-glucosaminyl-[heparan sulfate](n) + adenosine 3',5'-bisphosphate + 2 H(+). It participates in glycan metabolism; heparan sulfate biosynthesis. The protein operates within glycan metabolism; heparin biosynthesis. Essential bifunctional enzyme that catalyzes both the N-deacetylation and the N-sulfation of glucosamine (GlcNAc) of the glycosaminoglycan in heparan sulfate. Modifies the GlcNAc-GlcA disaccharide repeating sugar backbone to make N-sulfated heparosan, a prerequisite substrate for later modifications in heparin biosynthesis. The chain is Bifunctional heparan sulfate N-deacetylase/N-sulfotransferase 1 (hst-1) from Caenorhabditis elegans.